We begin with the raw amino-acid sequence, 479 residues long: 3-phytase B (479 aa).

An N-terminal signal peptide occupies residues 1-19; it reads MPRTSLLTLACALATGASA. The Nucleophile role is filled by H82. N-linked (GlcNAc...) asparagine glycosylation is found at N106, N191, N227, N250, and N315. D338 functions as the Proton donor in the catalytic mechanism. 3 N-linked (GlcNAc...) asparagine glycosylation sites follow: N425, N442, and N458.

Belongs to the histidine acid phosphatase family.

It carries out the reaction 1D-myo-inositol hexakisphosphate + H2O = 1D-myo-inositol 1,2,4,5,6-pentakisphosphate + phosphate. Functionally, catalyzes the hydrolysis of inorganic orthophosphate from phytate. The polypeptide is 3-phytase B (phyB) (Aspergillus niger).